Consider the following 395-residue polypeptide: S-adenosylmethionine synthase (395 aa).

Position 16 (His16) interacts with ATP. Asp18 lines the Mg(2+) pocket. Glu44 provides a ligand contact to K(+). L-methionine-binding residues include Glu57 and Gln100. The tract at residues 100–110 (QSPDIAQGVDD) is flexible loop. Residues 174 to 176 (DAK), 241 to 242 (RF), Asp250, 256 to 257 (RK), Ala273, and Lys277 contribute to the ATP site. Asp250 is an L-methionine binding site. An L-methionine-binding site is contributed by Lys281.

The protein belongs to the AdoMet synthase family. As to quaternary structure, homotetramer; dimer of dimers. Mg(2+) is required as a cofactor. The cofactor is K(+).

The protein localises to the cytoplasm. The catalysed reaction is L-methionine + ATP + H2O = S-adenosyl-L-methionine + phosphate + diphosphate. It functions in the pathway amino-acid biosynthesis; S-adenosyl-L-methionine biosynthesis; S-adenosyl-L-methionine from L-methionine: step 1/1. Its function is as follows. Catalyzes the formation of S-adenosylmethionine (AdoMet) from methionine and ATP. The overall synthetic reaction is composed of two sequential steps, AdoMet formation and the subsequent tripolyphosphate hydrolysis which occurs prior to release of AdoMet from the enzyme. In Lactiplantibacillus plantarum (strain ATCC BAA-793 / NCIMB 8826 / WCFS1) (Lactobacillus plantarum), this protein is S-adenosylmethionine synthase.